A 400-amino-acid chain; its full sequence is Enoyl-[acyl-carrier-protein] reductase [NADH] 1 (400 aa).

Residues 48–53 (GASSGY), 74–75 (FE), 111–112 (DA), and 139–140 (LA) each bind NAD(+). Tyrosine 225 contributes to the substrate binding site. Tyrosine 235 functions as the Proton donor in the catalytic mechanism. Residues lysine 244 and 273 to 275 (VVT) each bind NAD(+).

The protein belongs to the TER reductase family. As to quaternary structure, monomer.

It catalyses the reaction a 2,3-saturated acyl-[ACP] + NAD(+) = a (2E)-enoyl-[ACP] + NADH + H(+). Its pathway is lipid metabolism; fatty acid biosynthesis. Its function is as follows. Involved in the final reduction of the elongation cycle of fatty acid synthesis (FAS II). Catalyzes the reduction of a carbon-carbon double bond in an enoyl moiety that is covalently linked to an acyl carrier protein (ACP). The protein is Enoyl-[acyl-carrier-protein] reductase [NADH] 1 of Vibrio vulnificus (strain CMCP6).